Here is a 71-residue protein sequence, read N- to C-terminus: Translation initiation factor IF-1 (71 aa).

The S1-like domain occupies 1–71; it reads MSKDDLIQFT…LTKGRVIHRH (71 aa).

Belongs to the IF-1 family. As to quaternary structure, component of the 30S ribosomal translation pre-initiation complex which assembles on the 30S ribosome in the order IF-2 and IF-3, IF-1 and N-formylmethionyl-tRNA(fMet); mRNA recruitment can occur at any time during PIC assembly.

The protein localises to the cytoplasm. In terms of biological role, one of the essential components for the initiation of protein synthesis. Stabilizes the binding of IF-2 and IF-3 on the 30S subunit to which N-formylmethionyl-tRNA(fMet) subsequently binds. Helps modulate mRNA selection, yielding the 30S pre-initiation complex (PIC). Upon addition of the 50S ribosomal subunit IF-1, IF-2 and IF-3 are released leaving the mature 70S translation initiation complex. The polypeptide is Translation initiation factor IF-1 (Rickettsia canadensis (strain McKiel)).